Reading from the N-terminus, the 210-residue chain is HTH-type transcriptional regulator MtrR (210 aa).

One can recognise an HTH tetR-type domain in the interval 9–69; it reads LKTKEHLMLA…ALFQRICDDI (61 aa). The segment at residues 32-51 is a DNA-binding region (H-T-H motif); that stretch reads SLNEIAQAAGVTRGALYWHF.

Homodimer. Binds to DNA as a pair of dimers.

DNA binding is affected significantly by increasing the NaCl concentration. Controls the permeability of the cell envelope to hydrophobic compounds such as antibiotics and detergents. Represses transcription of the mtrCDE-encoded efflux pump by binding within the mtrCDE promoter. Also negatively regulates the expression of farR, by binding to its promoter region, leading indirectly to the positive regulation of expression of the farAB-encoded efflux pump. The polypeptide is HTH-type transcriptional regulator MtrR (Neisseria gonorrhoeae).